Here is a 591-residue protein sequence, read N- to C-terminus: V-type ATP synthase alpha chain (591 aa).

ATP is bound at residue 233-240 (GPFGAGKT).

This sequence belongs to the ATPase alpha/beta chains family.

It catalyses the reaction ATP + H2O + 4 H(+)(in) = ADP + phosphate + 5 H(+)(out). Functionally, produces ATP from ADP in the presence of a proton gradient across the membrane. The V-type alpha chain is a catalytic subunit. The sequence is that of V-type ATP synthase alpha chain from Streptococcus pyogenes serotype M3 (strain ATCC BAA-595 / MGAS315).